A 122-amino-acid chain; its full sequence is Histone H2B, gonadal (122 aa).

A disordered region spans residues 1 to 31 (MPPKVSSKGAKKAGKAKAARSGDKKRKRRRK). A compositionally biased stretch (basic residues) spans 9-31 (GAKKAGKAKAARSGDKKRKRRRK). Ser-109 is a glycosylation site (O-linked (GlcNAc) serine). Residue Lys-117 forms a Glycyl lysine isopeptide (Lys-Gly) (interchain with G-Cter in ubiquitin) linkage.

The protein belongs to the histone H2B family. As to quaternary structure, the nucleosome is a histone octamer containing two molecules each of H2A, H2B, H3 and H4 assembled in one H3-H4 heterotetramer and two H2A-H2B heterodimers. The octamer wraps approximately 147 bp of DNA. Monoubiquitination of Lys-117 gives a specific tag for epigenetic transcriptional activation and is also prerequisite for histone H3 'Lys-4' and 'Lys-79' methylation. Post-translationally, glcNAcylation at Ser-109 promotes monoubiquitination of Lys-117. It fluctuates in response to extracellular glucose, and associates with transcribed genes.

It is found in the nucleus. The protein resides in the chromosome. Its function is as follows. Core component of nucleosome. Nucleosomes wrap and compact DNA into chromatin, limiting DNA accessibility to the cellular machineries which require DNA as a template. Histones thereby play a central role in transcription regulation, DNA repair, DNA replication and chromosomal stability. DNA accessibility is regulated via a complex set of post-translational modifications of histones, also called histone code, and nucleosome remodeling. This is Histone H2B, gonadal from Patella granatina (Sandpaper limpet).